A 961-amino-acid chain; its full sequence is Autophagy-related protein 9 (961 aa).

4 disordered regions span residues 1-91 (MGDS…IKAN), 126-180 (KVGQ…SVNF), 198-225 (KDSK…KYRN), and 244-265 (SLFG…SKGP). The Cytoplasmic portion of the chain corresponds to 1 to 324 (MGDSESVNQD…SGFSCIVLRK (324 aa)). The segment covering 132 to 160 (SDEEDDGSLSNEEEDIDEEDEIDEIDADE) has biased composition (acidic residues). Residues 203-219 (NGEASNKMFTSSNQGNH) are compositionally biased toward polar residues. A helical membrane pass occupies residues 325-345 (LLNLTTLIFVVYISTYLGYCI). The Lumenal segment spans residues 346–374 (DYSKLPTSSRLSDIIIDQCYTTRITGITK). Residues 375-395 (GLLWVFYVFVGLKVVQFYFDL) traverse the membrane as a helical segment. The Cytoplasmic portion of the chain corresponds to 396–536 (QNLTDMHNFY…EELRKRFMLA (141 aa)). Residues 537-557 (GFLNIILSPFLVTYFVLLYFL) lie within the membrane without spanning it. Over 558–617 (RYFNEFKTSPGTIGARQYTPMAEWTFREFNELYHIFQKRLGLSTVIADKYINQFPKESTD) the chain is Cytoplasmic. A helical membrane pass occupies residues 618–638 (LILKFISFISGSFVAVLMSLT). Residues 639–654 (LLDSENFLNFEVTKDR) are Lumenal-facing. A helical transmembrane segment spans residues 655 to 675 (SVLFYITVFGAIWSVCRNSIS). The Cytoplasmic portion of the chain corresponds to 676 to 721 (DEYKVYDPDETIKELSEFTHYLPKEWEGKHHTEDVKQEFCKLYNIR). Residues 722-742 (LIILLRELASLVLTPFILWFS) lie within the membrane without spanning it. Residues 743-961 (LPACSDRIVD…DYYKTSDIGR (219 aa)) lie on the Cytoplasmic side of the membrane. Residues 900 to 918 (GKKSTLNSENPYDNSSNLG) are compositionally biased toward polar residues. The interval 900–940 (GKKSTLNSENPYDNSSNLGESFINPTIMPDRDLGRNGVNGG) is disordered.

This sequence belongs to the ATG9 family. As to quaternary structure, homotrimer; forms a homotrimer with a central pore that forms a path between the two membrane leaflets. In terms of processing, phosphorylated by ATG1. ATG1 phosphorylation is required for preautophagosome elongation.

Its subcellular location is the preautophagosomal structure membrane. It localises to the cytoplasmic vesicle membrane. It is found in the golgi apparatus membrane. The protein localises to the endoplasmic reticulum membrane. It catalyses the reaction a 1,2-diacyl-sn-glycero-3-phosphocholine(in) = a 1,2-diacyl-sn-glycero-3-phosphocholine(out). The enzyme catalyses a 1,2-diacyl-sn-glycero-3-phospho-L-serine(in) = a 1,2-diacyl-sn-glycero-3-phospho-L-serine(out). The catalysed reaction is a 1,2-diacyl-sn-glycero-3-phosphoethanolamine(in) = a 1,2-diacyl-sn-glycero-3-phosphoethanolamine(out). It carries out the reaction a 1,2-diacyl-sn-glycero-3-phospho-(1D-myo-inositol-3-phosphate)(in) = a 1,2-diacyl-sn-glycero-3-phospho-(1D-myo-inositol-3-phosphate)(out). In terms of biological role, phospholipid scramblase involved in autophagy and cytoplasm to vacuole transport (Cvt) vesicle formation. Cycles between the preautophagosomal structure/phagophore assembly site (PAS) and the cytoplasmic vesicle pool and supplies membrane for the growing autophagosome. Lipid scramblase activity plays a key role in preautophagosomal structure/phagophore assembly by distributing the phospholipids that arrive through ATG2 from the cytoplasmic to the luminal leaflet of the bilayer, thereby driving autophagosomal membrane expansion. Required for mitophagy. Also involved in endoplasmic reticulum-specific autophagic process and is essential for the survival of cells subjected to severe ER stress. Different machineries are required for anterograde trafficking to the PAS during either the Cvt pathway or bulk autophagy and for retrograde trafficking. The protein is Autophagy-related protein 9 (ATG9) of Vanderwaltozyma polyspora (strain ATCC 22028 / DSM 70294 / BCRC 21397 / CBS 2163 / NBRC 10782 / NRRL Y-8283 / UCD 57-17) (Kluyveromyces polysporus).